We begin with the raw amino-acid sequence, 551 residues long: Cytochrome P450 monooxygenase sdnQ (551 aa).

Residues 1–23 (MDDPSIASGFQQGTGRTTGANGT) are disordered. The segment covering 8–23 (SGFQQGTGRTTGANGT) has biased composition (polar residues). The N-linked (GlcNAc...) asparagine glycan is linked to Asn-21. Residues 41-57 (CIGTSLLVALLTTIIIY) form a helical membrane-spanning segment. Residue Cys-491 coordinates heme.

This sequence belongs to the cytochrome P450 family. Heme serves as cofactor.

The protein resides in the membrane. The protein operates within antibiotic biosynthesis. Its function is as follows. Cytochrome P450 monooxygenase; part of the gene cluster that mediates the biosynthesis of sordarin and hypoxysordarin, glycoside antibiotics with a unique tetracyclic diterpene aglycone structure. First, the geranylgeranyl diphosphate synthase sdnC constructs GGDP from farnesyl diphosphate and isopentenyl diphosphate. The diterpene cyclase sdnA then catalyzes the cyclization of GGDP to afford cycloaraneosene. Cycloaraneosene is then hydroxylated four times by the putative cytochrome P450 monooxygenases sdnB, sdnE, sdnF and sdnH to give a hydroxylated cycloaraneosene derivative such as cycloaraneosene-8,9,13,19-tetraol. Although the order of the hydroxylations is unclear, at least C8, C9 and C13 of the cycloaraneosene skeleton are hydroxylated before the sordaricin formation. Dehydration of the 13-hydroxy group of the hydroxylated cycloaraneosene derivative might be catalyzed by an unassigned hypothetical protein such as sdnG and sdnP to construct the cyclopentadiene moiety. The FAD-dependent oxidoreductase sdnN is proposed to catalyze the oxidation at C9 of the hydroxylated cycloaraneosene derivative and also catalyze the Baeyer-Villiger oxidation to give the lactone intermediate. The presumed lactone intermediate would be hydrolyzed to give an acrolein moiety and a carboxylate moiety. Then, [4+2]cycloaddition would occur between the acrolein moiety and the cyclopentadiene moiety to give sordaricin. SdnN might also be involved in the [4+2]cycloaddition after the hypothesized oxidation to accommodate the oxidized product and prompt the [4+2]cycloaddition. GDP-6-deoxy-D-altrose may be biosynthesized from GDP-D-mannose by the putative GDP-mannose-4,6-dehydratase sdnI and the short-chain dehydrogenase sdnK. The glycosyltransferase sdnJ catalyzes the attachment of 6-deoxy-D-altrose onto the 19-hydroxy group of sordaricin to give 4'-O-demethylsordarin. The methyltransferase sdnD would complete the biosynthesis of sordarin. Sordarin can be further modified into hypoxysordarin. The unique acyl chain at the 3'-hydroxy group of hypoxysordarin would be constructed by an iterative type I PKS sdnO and the trans-acting polyketide methyltransferase sdnL. SdnL would be responsible for the introduction of an alpha-methyl group of the polyketide chain. Alternatively, the beta-lactamase-like protein sdnR might be responsible for the cleavage and transfer of the polyketide chain from the PKS sdnO to sordarin. Two putative cytochrome P450 monooxygenases, sdnQ and sdnT, might catalyze the epoxidations of the polyketide chain to complete the biosynthesis of hypoxysordarin. Transcriptional regulators sdnM and sdnS are presumably encoded for the transcriptional regulation of the expression of the sdn gene cluster. The chain is Cytochrome P450 monooxygenase sdnQ from Sordaria araneosa (Pleurage araneosa).